Consider the following 317-residue polypeptide: 2,3,4,5-tetrahydropyridine-2,6-dicarboxylate N-succinyltransferase (317 aa).

2 residues coordinate Mg(2+): Asp166 and Glu183. Glu199 (acyl-anhydride intermediate) is an active-site residue. Succinyl-CoA contacts are provided by residues Arg201, Gly216, Ser219, Ala242, 257–258 (EA), Gly265, Lys277, and 290–293 (RRNS).

This sequence belongs to the type 2 tetrahydrodipicolinate N-succinyltransferase family. Homotrimer.

The protein localises to the cytoplasm. The enzyme catalyses (S)-2,3,4,5-tetrahydrodipicolinate + succinyl-CoA + H2O = (S)-2-succinylamino-6-oxoheptanedioate + CoA. It functions in the pathway amino-acid biosynthesis; L-lysine biosynthesis via DAP pathway; LL-2,6-diaminopimelate from (S)-tetrahydrodipicolinate (succinylase route): step 1/3. Functionally, catalyzes the conversion of the cyclic tetrahydrodipicolinate (THDP) into the acyclic N-succinyl-L-2-amino-6-oxopimelate using succinyl-CoA. This Mycobacterium tuberculosis (strain CDC 1551 / Oshkosh) protein is 2,3,4,5-tetrahydropyridine-2,6-dicarboxylate N-succinyltransferase (dapD).